Reading from the N-terminus, the 180-residue chain is Nucleoid-associated protein At4g30620, chloroplastic (180 aa).

The N-terminal 48 residues, M1–R48, are a transit peptide targeting the chloroplast. Positions R45 to Q65 are disordered. Basic and acidic residues predominate over residues G56 to Q65.

This sequence belongs to the YbaB/EbfC family. As to quaternary structure, homodimer. Binds to the translation initiation factors TIF3E1.

It localises to the plastid. It is found in the chloroplast. Its function is as follows. Binds to DNA and alters its conformation. May be involved in regulation of gene expression, nucleoid organization and DNA protection. This Arabidopsis thaliana (Mouse-ear cress) protein is Nucleoid-associated protein At4g30620, chloroplastic.